The sequence spans 878 residues: Alanine--tRNA ligase (878 aa).

Zn(2+) is bound by residues H567, H571, C669, and H673.

This sequence belongs to the class-II aminoacyl-tRNA synthetase family. Zn(2+) is required as a cofactor.

The protein resides in the cytoplasm. The enzyme catalyses tRNA(Ala) + L-alanine + ATP = L-alanyl-tRNA(Ala) + AMP + diphosphate. In terms of biological role, catalyzes the attachment of alanine to tRNA(Ala) in a two-step reaction: alanine is first activated by ATP to form Ala-AMP and then transferred to the acceptor end of tRNA(Ala). Also edits incorrectly charged Ser-tRNA(Ala) and Gly-tRNA(Ala) via its editing domain. This is Alanine--tRNA ligase from Rickettsia akari (strain Hartford).